The primary structure comprises 475 residues: ATP synthase subunit beta, chloroplastic (475 aa).

155–162 serves as a coordination point for ATP; it reads GGAGVGKT.

This sequence belongs to the ATPase alpha/beta chains family. In terms of assembly, F-type ATPases have 2 components, CF(1) - the catalytic core - and CF(0) - the membrane proton channel. CF(1) has five subunits: alpha(3), beta(3), gamma(1), delta(1), epsilon(1). CF(0) has four main subunits: a(1), b(1), b'(1) and c(9-12).

It localises to the plastid. The protein resides in the chloroplast thylakoid membrane. The enzyme catalyses ATP + H2O + 4 H(+)(in) = ADP + phosphate + 5 H(+)(out). Produces ATP from ADP in the presence of a proton gradient across the membrane. The catalytic sites are hosted primarily by the beta subunits. The sequence is that of ATP synthase subunit beta, chloroplastic from Porphyra purpurea (Red seaweed).